The chain runs to 210 residues: Cytochrome c biogenesis ATP-binding export protein CcmA (210 aa).

The region spanning 3-205 (LHLQAAGLAC…KPSGYRELNL (203 aa)) is the ABC transporter domain. 37 to 44 (GPNGSGKT) provides a ligand contact to ATP.

Belongs to the ABC transporter superfamily. CcmA exporter (TC 3.A.1.107) family. As to quaternary structure, the complex is composed of two ATP-binding proteins (CcmA) and two transmembrane proteins (CcmB).

The protein resides in the cell inner membrane. It carries out the reaction heme b(in) + ATP + H2O = heme b(out) + ADP + phosphate + H(+). In terms of biological role, part of the ABC transporter complex CcmAB involved in the biogenesis of c-type cytochromes; once thought to export heme, this seems not to be the case, but its exact role is uncertain. Responsible for energy coupling to the transport system. The chain is Cytochrome c biogenesis ATP-binding export protein CcmA from Pseudomonas putida (strain ATCC 47054 / DSM 6125 / CFBP 8728 / NCIMB 11950 / KT2440).